A 239-amino-acid chain; its full sequence is tRNA (guanine-N(1)-)-methyltransferase (239 aa).

Residues Gly109 and Ile128–Leu133 contribute to the S-adenosyl-L-methionine site.

Belongs to the RNA methyltransferase TrmD family. As to quaternary structure, homodimer.

The protein localises to the cytoplasm. It carries out the reaction guanosine(37) in tRNA + S-adenosyl-L-methionine = N(1)-methylguanosine(37) in tRNA + S-adenosyl-L-homocysteine + H(+). In terms of biological role, specifically methylates guanosine-37 in various tRNAs. In Thermus thermophilus (strain ATCC BAA-163 / DSM 7039 / HB27), this protein is tRNA (guanine-N(1)-)-methyltransferase.